The chain runs to 229 residues: 2-phytyl-1,4-naphtoquinone methyltransferase (229 aa).

The protein belongs to the class I-like SAM-binding methyltransferase superfamily. MenG/UbiE family.

It carries out the reaction demethylphylloquinol + S-adenosyl-L-methionine = phylloquinol + S-adenosyl-L-homocysteine + H(+). The protein operates within cofactor biosynthesis; phylloquinone biosynthesis. Functionally, methyltransferase required for the conversion of 2-phytyl-1,4-beta-naphthoquinol to phylloquinol. This is 2-phytyl-1,4-naphtoquinone methyltransferase from Trichormus variabilis (strain ATCC 29413 / PCC 7937) (Anabaena variabilis).